The sequence spans 187 residues: Peptide deformylase (187 aa).

2 residues coordinate Fe cation: Cys-107 and His-149. Residue Glu-150 is part of the active site. His-153 provides a ligand contact to Fe cation.

It belongs to the polypeptide deformylase family. The cofactor is Fe(2+).

The enzyme catalyses N-terminal N-formyl-L-methionyl-[peptide] + H2O = N-terminal L-methionyl-[peptide] + formate. In terms of biological role, removes the formyl group from the N-terminal Met of newly synthesized proteins. Requires at least a dipeptide for an efficient rate of reaction. N-terminal L-methionine is a prerequisite for activity but the enzyme has broad specificity at other positions. In Microchaete diplosiphon (Fremyella diplosiphon), this protein is Peptide deformylase.